The following is a 224-amino-acid chain: ATP-dependent dethiobiotin synthetase BioD (224 aa).

12–17 (EVGKTV) is an ATP binding site. Position 16 (Thr16) interacts with Mg(2+). Lys34 is a catalytic residue. A substrate-binding site is contributed by Thr38. Residues Asp47, 106 to 109 (EGAG), 166 to 167 (GS), and 196 to 198 (PEG) contribute to the ATP site. Mg(2+)-binding residues include Asp47 and Glu106.

It belongs to the dethiobiotin synthetase family. In terms of assembly, homodimer. The cofactor is Mg(2+).

The protein localises to the cytoplasm. It catalyses the reaction (7R,8S)-7,8-diammoniononanoate + CO2 + ATP = (4R,5S)-dethiobiotin + ADP + phosphate + 3 H(+). It functions in the pathway cofactor biosynthesis; biotin biosynthesis; biotin from 7,8-diaminononanoate: step 1/2. Catalyzes a mechanistically unusual reaction, the ATP-dependent insertion of CO2 between the N7 and N8 nitrogen atoms of 7,8-diaminopelargonic acid (DAPA, also called 7,8-diammoniononanoate) to form a ureido ring. The protein is ATP-dependent dethiobiotin synthetase BioD of Saccharopolyspora erythraea (strain ATCC 11635 / DSM 40517 / JCM 4748 / NBRC 13426 / NCIMB 8594 / NRRL 2338).